A 927-amino-acid polypeptide reads, in one-letter code: DIS3-like exonuclease 2 (927 aa).

A compositionally biased stretch (basic residues) spans 1–12 (MDLKPNIRRKEK). The disordered stretch occupies residues 1–168 (MDLKPNIRRK…DTNNATEMVS (168 aa)). Residues 13-31 (RNLLKGEAALEKKGSIDRK) are compositionally biased toward basic and acidic residues. Residues 97 to 106 (VKPKAKKKNS) are compositionally biased toward basic residues. Basic and acidic residues predominate over residues 107–152 (KEKISKSSKQDEHKTDVHKESVSKLSKNLESRNNRDENSAKREKNN). Positions 153 to 168 (SHQVEADTNNATEMVS) are enriched in polar residues. The Mg(2+) site is built by Asp-453 and Asp-462.

This sequence belongs to the RNR ribonuclease family. DIS3L2 subfamily. Mg(2+) is required as a cofactor. The cofactor is Mn(2+).

It localises to the cytoplasm. The protein resides in the P-body. 3'-5'-exoribonuclease that specifically recognizes RNAs polyuridylated at their 3' end and mediates their degradation. Component of an exosome-independent RNA degradation pathway that mediates degradation of cytoplasmic mRNAs that have been deadenylated and subsequently uridylated at their 3'. The sequence is that of DIS3-like exonuclease 2 (dis32) from Schizosaccharomyces pombe (strain 972 / ATCC 24843) (Fission yeast).